Consider the following 860-residue polypeptide: DNA mismatch repair protein MutS (860 aa).

606-613 is a binding site for ATP; the sequence is GPNMSGKS.

Belongs to the DNA mismatch repair MutS family.

Functionally, this protein is involved in the repair of mismatches in DNA. It is possible that it carries out the mismatch recognition step. This protein has a weak ATPase activity. The protein is DNA mismatch repair protein MutS of Geobacillus sp. (strain WCH70).